Reading from the N-terminus, the 614-residue chain is Chaperone protein DnaK (614 aa).

Threonine 174 bears the Phosphothreonine; by autocatalysis mark. Residues 576-614 form a disordered region; that stretch reads QTGGAAPGPDMGADPGAGGAQGDDNVVDAEYTEVDKDQK. The segment covering 578–589 has biased composition (low complexity); that stretch reads GGAAPGPDMGAD.

Belongs to the heat shock protein 70 family.

Acts as a chaperone. The chain is Chaperone protein DnaK from Desulfitobacterium hafniense (strain DSM 10664 / DCB-2).